A 188-amino-acid chain; its full sequence is MRLPLPLLLLFGCRAILGSFGDRVSLSATAPTLDDEEKYASHMPTHLRCDACRAVAYQMGQHLAKAEAKSHTPDSSGSQELSESTYTDVLDRTCSQNWQSYGVQEVNQMKRLMGPGLSKGPEPSISVMITGGPWPNRLSMTCFHYLGEFGEDQIYEAYRQGHETLEALLCGGTHGSCSQEIPAQREEL.

Positions 1–21 are cleaved as a signal peptide; the sequence is MRLPLPLLLLFGCRAILGSFG. 3 disulfides stabilise this stretch: cysteine 49–cysteine 177, cysteine 52–cysteine 170, and cysteine 94–cysteine 142. The Prevents secretion from ER signature appears at 185-188; that stretch reads REEL.

This sequence belongs to the MZB1 family. As to quaternary structure, part of the ER chaperone complex, a multi-protein complex in the endoplasmic reticulum containing a large number of molecular chaperones which associates with unassembled incompletely folded immunoglobulin heavy chains. Interacts with HSP90B1 and PDIA3 in a calcium-dependent manner. Post-translationally, forms an interchain disulfide bond with IgM monomers.

Its subcellular location is the endoplasmic reticulum lumen. The protein resides in the secreted. Its function is as follows. Associates with immunoglobulin M (IgM) heavy and light chains and promotes IgM assembly and secretion. May exert its effect by acting as a molecular chaperone or as an oxidoreductase as it displays a low level of oxidoreductase activity. Helps to diversify peripheral B-cell functions by regulating Ca(2+) stores, antibody secretion, and integrin activation. In terms of biological role, acts as a hormone-regulated adipokine/pro-inflammatory cytokine that is implicated in causing chronic inflammation, affecting cellular expansion and blunting insulin response in adipocytes. May have a role in the onset of insulin resistance. The sequence is that of Marginal zone B- and B1-cell-specific protein (Mzb1) from Rattus norvegicus (Rat).